The chain runs to 185 residues: Homeobox-leucine zipper protein ATHB-22 (185 aa).

A DNA-binding region (homeobox) is located at residues 76 to 135 (TSEQLKFLERSFQEEIKLNPDRKMKLNPDRKMKLSKELGLQPRQIAVWFQNRKARWKNKQ). Residues 136–164 (LEHLYESLRQEFDIVSREKELLQEELIQL) form a leucine-zipper region.

It belongs to the HD-ZIP homeobox family. Class I subfamily. Expressed in siliques.

The protein resides in the nucleus. In terms of biological role, probable transcription factor. The sequence is that of Homeobox-leucine zipper protein ATHB-22 (ATHB-22) from Arabidopsis thaliana (Mouse-ear cress).